A 131-amino-acid polypeptide reads, in one-letter code: Holo-[acyl-carrier-protein] synthase (131 aa).

The Mg(2+) site is built by D8 and E59.

Belongs to the P-Pant transferase superfamily. AcpS family. Mg(2+) is required as a cofactor.

The protein localises to the cytoplasm. It catalyses the reaction apo-[ACP] + CoA = holo-[ACP] + adenosine 3',5'-bisphosphate + H(+). In terms of biological role, transfers the 4'-phosphopantetheine moiety from coenzyme A to a Ser of acyl-carrier-protein. This chain is Holo-[acyl-carrier-protein] synthase, found in Rickettsia conorii (strain ATCC VR-613 / Malish 7).